A 189-amino-acid polypeptide reads, in one-letter code: DAN domain family member 5 (189 aa).

Residues 1 to 22 (MLLGQLSTLLCLLSGALPTGSG) form the signal peptide. Residue N38 is glycosylated (N-linked (GlcNAc...) asparagine). Cystine bridges form between C101–C148, C115–C162, C125–C183, and C129–C185. Residues 101–186 (CKAVPFVQVF…TMLIEGCHCS (86 aa)) form the CTCK domain.

It belongs to the DAN family. As to expression, expressed in the retina, in inner segments of photoreceptors, at or close to the outer plexiform layer and in the ganglion cell layer (at protein level).

It localises to the secreted. Functionally, antagonist of the extracellular signaling protein NODAL, which is required for correct left-right patterning during embryonic development. Antagonist of BMP and TGF-beta signaling. Independently of its role in left-right axis establishment, plays a role during heart development, possibly through the regulation of TGF-beta/Nodal signaling pathway. Displays anti-angiogenic activity by inhibiting endothelial sprouting, migration, and proliferation. Once internalized by endothelial cells, may alter their redox and glycolytic balance. In Homo sapiens (Human), this protein is DAN domain family member 5 (DAND5).